The sequence spans 335 residues: Ketol-acid reductoisomerase (NADP(+)) 2 (335 aa).

A KARI N-terminal Rossmann domain is found at 1-180 (MKTYYEQDAN…GCTRAGVIET (180 aa)). Residues 24 to 27 (YGSQ), Arg-47, Ser-51, and 81 to 84 (DEQQ) each bind NADP(+). The active site involves His-106. Gly-132 lines the NADP(+) pocket. One can recognise a KARI C-terminal knotted domain in the interval 181 to 326 (TFQEETETDL…EELREMMSWI (146 aa)). Asp-189, Glu-193, Glu-225, and Glu-229 together coordinate Mg(2+). Position 250 (Ser-250) interacts with substrate.

The protein belongs to the ketol-acid reductoisomerase family. It depends on Mg(2+) as a cofactor.

It catalyses the reaction (2R)-2,3-dihydroxy-3-methylbutanoate + NADP(+) = (2S)-2-acetolactate + NADPH + H(+). It carries out the reaction (2R,3R)-2,3-dihydroxy-3-methylpentanoate + NADP(+) = (S)-2-ethyl-2-hydroxy-3-oxobutanoate + NADPH + H(+). The protein operates within amino-acid biosynthesis; L-isoleucine biosynthesis; L-isoleucine from 2-oxobutanoate: step 2/4. Its pathway is amino-acid biosynthesis; L-valine biosynthesis; L-valine from pyruvate: step 2/4. Its function is as follows. Involved in the biosynthesis of branched-chain amino acids (BCAA). Catalyzes an alkyl-migration followed by a ketol-acid reduction of (S)-2-acetolactate (S2AL) to yield (R)-2,3-dihydroxy-isovalerate. In the isomerase reaction, S2AL is rearranged via a Mg-dependent methyl migration to produce 3-hydroxy-3-methyl-2-ketobutyrate (HMKB). In the reductase reaction, this 2-ketoacid undergoes a metal-dependent reduction by NADPH to yield (R)-2,3-dihydroxy-isovalerate. This is Ketol-acid reductoisomerase (NADP(+)) 2 from Bacillus anthracis.